Here is a 406-residue protein sequence, read N- to C-terminus: Acetate kinase (406 aa).

N8 is a binding site for Mg(2+). Position 15 (K15) interacts with ATP. Substrate is bound at residue R92. The Proton donor/acceptor role is filled by D149. ATP-binding positions include 209–213 (HLGNG), 283–285 (DFR), and 331–335 (GVGEN). E385 is a binding site for Mg(2+).

The protein belongs to the acetokinase family. Homodimer. Mg(2+) serves as cofactor. It depends on Mn(2+) as a cofactor.

Its subcellular location is the cytoplasm. The enzyme catalyses acetate + ATP = acetyl phosphate + ADP. The protein operates within metabolic intermediate biosynthesis; acetyl-CoA biosynthesis; acetyl-CoA from acetate: step 1/2. Its function is as follows. Catalyzes the formation of acetyl phosphate from acetate and ATP. Can also catalyze the reverse reaction. This Corynebacterium aurimucosum (strain ATCC 700975 / DSM 44827 / CIP 107346 / CN-1) (Corynebacterium nigricans) protein is Acetate kinase.